The following is a 317-amino-acid chain: Small ribosomal subunit protein uS2 (317 aa).

The residue at position 2 (S2) is an N-acetylserine. 2 laminin-binding regions span residues 161–180 (IPCNNKGPHSVGLMWWMLAR) and 205–229 (RDPEEIEKEEQAAAEKAVGKEEFQG). 5 [DE]-W-[ST] repeats span residues 230-232 (EWS), 245-247 (DWS), 288-290 (DWS), 297-299 (DWS), and 315-317 (EWS). The segment at 242–317 (EVPDWSEGVQ…DWGGSTAEWS (76 aa)) is laminin-binding. The tract at residues 278–317 (PGPTTEGYSEDWSAQPATEDWSAAPTAQAGDWGGSTAEWS) is disordered.

This sequence belongs to the universal ribosomal protein uS2 family. As to quaternary structure, monomer (37LRP) and homodimer (67LR). Component of the small ribosomal subunit. Mature ribosomes consist of a small (40S) and a large (60S) subunit. The 40S subunit contains about 33 different proteins and 1 molecule of RNA (18S). The 60S subunit contains about 49 different proteins and 3 molecules of RNA (28S, 5.8S and 5S). Interacts with rps21. Interacts with several laminins including at least lamb1. Interacts with mdk. In terms of processing, acylated. Acylation may be a prerequisite for conversion of the monomeric 37 kDa laminin receptor precursor (37LRP) to the mature dimeric 67 kDa laminin receptor (67LR), and may provide a mechanism for membrane association. Post-translationally, cleaved by stromelysin-3 (ST3) at the cell surface. Cleavage by stromelysin-3 may be a mechanism to alter cell-extracellular matrix interactions.

The protein resides in the cell membrane. The protein localises to the cytoplasm. It localises to the nucleus. In terms of biological role, required for the assembly and/or stability of the 40S ribosomal subunit. Required for the processing of the 20S rRNA-precursor to mature 18S rRNA in a late step of the maturation of 40S ribosomal subunits. Also functions as a cell surface receptor for laminin. Plays a role in cell adhesion to the basement membrane and in the consequent activation of signaling transduction pathways. May play a role in cell fate determination and tissue morphogenesis. The protein is Small ribosomal subunit protein uS2 (rpsa) of Ictalurus punctatus (Channel catfish).